Here is a 405-residue protein sequence, read N- to C-terminus: Arginine biosynthesis bifunctional protein ArgJ (405 aa).

6 residues coordinate substrate: Thr-152, Lys-178, Thr-189, Glu-276, Asn-400, and Ser-405. Thr-189 (nucleophile) is an active-site residue.

The protein belongs to the ArgJ family. In terms of assembly, heterotetramer of two alpha and two beta chains.

The protein resides in the cytoplasm. The catalysed reaction is N(2)-acetyl-L-ornithine + L-glutamate = N-acetyl-L-glutamate + L-ornithine. The enzyme catalyses L-glutamate + acetyl-CoA = N-acetyl-L-glutamate + CoA + H(+). It participates in amino-acid biosynthesis; L-arginine biosynthesis; L-ornithine and N-acetyl-L-glutamate from L-glutamate and N(2)-acetyl-L-ornithine (cyclic): step 1/1. It functions in the pathway amino-acid biosynthesis; L-arginine biosynthesis; N(2)-acetyl-L-ornithine from L-glutamate: step 1/4. Catalyzes two activities which are involved in the cyclic version of arginine biosynthesis: the synthesis of N-acetylglutamate from glutamate and acetyl-CoA as the acetyl donor, and of ornithine by transacetylation between N(2)-acetylornithine and glutamate. The polypeptide is Arginine biosynthesis bifunctional protein ArgJ (Chromobacterium violaceum (strain ATCC 12472 / DSM 30191 / JCM 1249 / CCUG 213 / NBRC 12614 / NCIMB 9131 / NCTC 9757 / MK)).